The chain runs to 432 residues: ATP-dependent RNA helicase RhlB (432 aa).

Positions 9–37 (QRFADLPLHAEVIQALNENGFEFCTPIQA) match the Q motif motif. Residues 40-219 (LPVLLKAKDI…YDHMNDPEKV (180 aa)) enclose the Helicase ATP-binding domain. An ATP-binding site is contributed by 53 to 60 (AQTGTGKT). The DEAD box signature appears at 165–168 (DEAD). The Helicase C-terminal domain maps to 243–390 (KMRLLLTLME…VSRYDREALL (148 aa)). The tract at residues 395 to 432 (TPVKIHRKHPTSRTRDGAKGAHRSGGARPPRHRTRRPS) is disordered. Positions 423-432 (PPRHRTRRPS) are enriched in basic residues.

Belongs to the DEAD box helicase family. RhlB subfamily. Component of the RNA degradosome, which is a multiprotein complex involved in RNA processing and mRNA degradation.

Its subcellular location is the cytoplasm. The enzyme catalyses ATP + H2O = ADP + phosphate + H(+). Its function is as follows. DEAD-box RNA helicase involved in RNA degradation. Has RNA-dependent ATPase activity and unwinds double-stranded RNA. The protein is ATP-dependent RNA helicase RhlB of Shewanella denitrificans (strain OS217 / ATCC BAA-1090 / DSM 15013).